The following is a 179-amino-acid chain: Large ribosomal subunit protein uL6 (179 aa).

Belongs to the universal ribosomal protein uL6 family. Part of the 50S ribosomal subunit.

In terms of biological role, this protein binds to the 23S rRNA, and is important in its secondary structure. It is located near the subunit interface in the base of the L7/L12 stalk, and near the tRNA binding site of the peptidyltransferase center. The chain is Large ribosomal subunit protein uL6 from Prochlorococcus marinus (strain SARG / CCMP1375 / SS120).